The following is a 197-amino-acid chain: Imidazoleglycerol-phosphate dehydratase (197 aa).

It belongs to the imidazoleglycerol-phosphate dehydratase family.

Its subcellular location is the cytoplasm. It carries out the reaction D-erythro-1-(imidazol-4-yl)glycerol 3-phosphate = 3-(imidazol-4-yl)-2-oxopropyl phosphate + H2O. It functions in the pathway amino-acid biosynthesis; L-histidine biosynthesis; L-histidine from 5-phospho-alpha-D-ribose 1-diphosphate: step 6/9. The sequence is that of Imidazoleglycerol-phosphate dehydratase from Stutzerimonas stutzeri (strain A1501) (Pseudomonas stutzeri).